We begin with the raw amino-acid sequence, 251 residues long: Hydroxyacylglutathione hydrolase (251 aa).

Residues His53, His55, Asp57, His58, His110, Asp127, and His165 each contribute to the Zn(2+) site.

Belongs to the metallo-beta-lactamase superfamily. Glyoxalase II family. As to quaternary structure, monomer. Zn(2+) serves as cofactor.

It carries out the reaction an S-(2-hydroxyacyl)glutathione + H2O = a 2-hydroxy carboxylate + glutathione + H(+). The protein operates within secondary metabolite metabolism; methylglyoxal degradation; (R)-lactate from methylglyoxal: step 2/2. In terms of biological role, thiolesterase that catalyzes the hydrolysis of S-D-lactoyl-glutathione to form glutathione and D-lactic acid. This is Hydroxyacylglutathione hydrolase from Escherichia coli (strain 55989 / EAEC).